The chain runs to 722 residues: Transmembrane channel-like protein 8 (722 aa).

Residues 1 to 21 (MFRQWSVQSGPAPRRPESQAA) are disordered. The Cytoplasmic segment spans residues 1–118 (MFRQWSVQSG…GIQSYFTFLR (118 aa)). A phosphoserine mark is found at S6 and S18. The chain crosses the membrane as a helical span at residues 119-139 (FLLLLNLLTMLLTACFVLLPL). The Lumenal segment spans residues 140–204 (VWLRPPELGP…AGPESSSEYS (65 aa)). Residue N184 is glycosylated (N-linked (GlcNAc...) asparagine). Residues 205-225 (IRLAYLLSPMVCLLLCFCGIL) form a helical membrane-spanning segment. The Cytoplasmic portion of the chain corresponds to 226–307 (QRMAEGLPQQ…CRLLTYLRTN (82 aa)). The chain crosses the membrane as a helical span at residues 308 to 328 (ILIVLLVVGAISAIFWATKYS). Residues 329–375 (QDNKEESLFLVLQYLPPGVISLVNFLGPQLFTVLIQLENYPPGTEVN) lie on the Lumenal side of the membrane. Residues 366 to 534 (ENYPPGTEVN…SPRRFRASSS (169 aa)) are TMC domain. A glycan (N-linked (GlcNAc...) asparagine) is linked at N375. A helical membrane pass occupies residues 376–396 (LTLIWCVVLKLASLGMFSFSL). Topologically, residues 397–430 (GQTVLCIGRNKTSCESYGYNACDYQCWENSVGEE) are cytoplasmic. A helical transmembrane segment spans residues 431–451 (LYKLIIFNFLLTVAFAFLVSL). At 452 to 492 (PRRLLVERFSGWFWTWLDREEFLVPKNVLDIVAAQTVTWMG) the chain is on the lumenal side. Residues 493 to 513 (LFYCPLLPLLNSVFLFLTFYI) form a helical membrane-spanning segment. Over 514–536 (KKYTLLRNSRASPRRFRASSSTF) the chain is Cytoplasmic. A helical membrane pass occupies residues 537-557 (FFHLVLLLGLLLAAVPLAYVI). Residues 558-598 (SSTHSSWDCGLFTNYSAPWQVVPELVALQLPLPSQRALRYL) are Lumenal-facing. N-linked (GlcNAc...) asparagine glycosylation is present at N571. A helical membrane pass occupies residues 599 to 619 (SSHAFSFPLLILLSIVLTVCI). At 620–722 (SQSRANARAI…RFHFPSRTEL (103 aa)) the chain is on the cytoplasmic side. Residues S658, S663, and S673 each carry the phosphoserine modification. Residues 658 to 722 (SPEPGSPHSR…RFHFPSRTEL (65 aa)) form a disordered region. The segment covering 678 to 687 (FPCPGSPGPR) has biased composition (pro residues). A compositionally biased stretch (low complexity) spans 689–712 (PRLAPSNRLSSSSLGAPSASVPAS). Position 698 is a phosphoserine (S698).

Belongs to the TMC family. As to quaternary structure, interacts with TMC6. Interacts and forms a complex with TMC6 and CIB1; the interaction stabilizes each component of the complex. Interacts and forms a complex with TMC6 and SLC30A1/ZNT1; the interaction regulates zinc transport into the ER. Interacts with TRADD; the interaction competes with TRADD/RIPK1/TRAF2/cIAPs complex I formation and facilites complex II formation. In terms of tissue distribution, expressed in thymus, lung, prostate, placenta, testis and spleen. Expressed in lymphocytes and peripheral lymphocytes.

It is found in the endoplasmic reticulum membrane. The protein resides in the golgi apparatus membrane. Its subcellular location is the nucleus membrane. Functionally, acts as a regulatory protein involved in the regulation of numerous cellular processes. Together with its homolog TMC6/EVER1, forms a complex with calcium-binding protein CIB1 in lymphocytes and keratynocytes where TMC6 and TMC8 stabilize CIB1 levels and reciprocally. Together with TMC6, also forms a complex with and activates zinc transporter ZNT1 at the ER membrane of keratynocytes, thereby facilitating zinc uptake into the ER. Also inhibits receptor-mediated calcium release from ER stores and calcium activated and volume regulated chloride channels. Down-regulates the activity of transcription factors induced by zinc and cytokines. Also sequesters TRADD which impairs the recruitment of TRAF2 and RIPK1 in the pro-survival complex I and promotes proapoptotic complex II formation, and may therefore be involved in TNF-induced cell death/survival decisions. In Mus musculus (Mouse), this protein is Transmembrane channel-like protein 8.